Consider the following 146-residue polypeptide: Transcriptional regulator MraZ (146 aa).

SpoVT-AbrB domains follow at residues 5–52 and 81–124; these read SAAL…PRAE and AAEI…KEES.

Belongs to the MraZ family. In terms of assembly, forms oligomers.

The protein localises to the cytoplasm. The protein resides in the nucleoid. The sequence is that of Transcriptional regulator MraZ from Alcanivorax borkumensis (strain ATCC 700651 / DSM 11573 / NCIMB 13689 / SK2).